Here is a 358-residue protein sequence, read N- to C-terminus: Probable anti-sigma-M factor YhdL (358 aa).

A helical membrane pass occupies residues 74 to 96 (ISVLAVISTLMILPLCTLGSYLY).

In terms of assembly, the N-terminus of YhdL interacts with sigma-M. YhdL interacts specifically with YhdK.

The protein localises to the membrane. This chain is Probable anti-sigma-M factor YhdL (yhdL), found in Bacillus subtilis (strain 168).